The sequence spans 178 residues: Interleukin-10 (178 aa).

A signal peptide spans Met-1–Ile-18. Asn-29 is a glycosylation site (N-linked (GlcNAc...) asparagine). 2 disulfide bridges follow: Cys-30-Cys-126 and Cys-80-Cys-132. N-linked (GlcNAc...) asparagine glycosylation is present at Asn-134.

Belongs to the IL-10 family. As to quaternary structure, homodimer. Interacts with IL10RA and IL10RB.

It localises to the secreted. Its function is as follows. Major immune regulatory cytokine that acts on many cells of the immune system where it has profound anti-inflammatory functions, limiting excessive tissue disruption caused by inflammation. Mechanistically, IL10 binds to its heterotetrameric receptor comprising IL10RA and IL10RB leading to JAK1 and STAT2-mediated phosphorylation of STAT3. In turn, STAT3 translocates to the nucleus where it drives expression of anti-inflammatory mediators. Targets antigen-presenting cells (APCs) such as macrophages and monocytes and inhibits their release of pro-inflammatory cytokines including granulocyte-macrophage colony-stimulating factor /GM-CSF, granulocyte colony-stimulating factor/G-CSF, IL-1 alpha, IL-1 beta, IL-6, IL-8 and TNF-alpha. Also interferes with antigen presentation by reducing the expression of MHC-class II and co-stimulatory molecules, thereby inhibiting their ability to induce T cell activation. In addition, controls the inflammatory response of macrophages by reprogramming essential metabolic pathways including mTOR signaling. The chain is Interleukin-10 (Il10) from Mus musculus (Mouse).